A 496-amino-acid polypeptide reads, in one-letter code: L-arabinose isomerase (496 aa).

Residues Glu-306, Glu-331, His-348, and His-447 each coordinate Mn(2+).

It belongs to the arabinose isomerase family. Homotetramer. The cofactor is Mn(2+).

It carries out the reaction beta-L-arabinopyranose = L-ribulose. It functions in the pathway carbohydrate degradation; L-arabinose degradation via L-ribulose; D-xylulose 5-phosphate from L-arabinose (bacterial route): step 1/3. Inhibited by copper. Catalyzes the conversion of L-arabinose to L-ribulose. In vitro, converts D-galactose into D-tagatose. The protein is L-arabinose isomerase (araA) of Geobacillus stearothermophilus (Bacillus stearothermophilus).